We begin with the raw amino-acid sequence, 70 residues long: Guanine nucleotide-binding protein G(I)/G(S)/G(O) subunit gamma-8 (70 aa).

The residue at position 67 (Cys-67) is a Cysteine methyl ester. Cys-67 carries S-geranylgeranyl cysteine lipidation. Residues 68–70 (VLL) constitute a propeptide, removed in mature form.

Belongs to the G protein gamma family. In terms of assembly, g proteins are composed of 3 units, alpha, beta and gamma.

The protein localises to the cell membrane. Its function is as follows. Guanine nucleotide-binding proteins (G proteins) are involved as a modulator or transducer in various transmembrane signaling systems. The beta and gamma chains are required for the GTPase activity, for replacement of GDP by GTP, and for G protein-effector interaction. The polypeptide is Guanine nucleotide-binding protein G(I)/G(S)/G(O) subunit gamma-8 (GNG8) (Homo sapiens (Human)).